We begin with the raw amino-acid sequence, 406 residues long: Digeranylgeranylglycerophospholipid reductase 2 (406 aa).

Positions 15, 34, 45, 46, 48, 99, 123, 279, 291, and 292 each coordinate FAD.

Belongs to the geranylgeranyl reductase family. DGGGPL reductase subfamily. It depends on FAD as a cofactor.

It carries out the reaction a 2,3-bis-O-phytanyl-sn-glycerol 1-phospholipid + 8 oxidized 2[4Fe-4S]-[ferredoxin] = a 2,3-bis-O-(geranylgeranyl)-sn-glycerol 1-phospholipid + 8 reduced 2[4Fe-4S]-[ferredoxin] + 16 H(+). It catalyses the reaction 2,3-bis-O-(phytanyl)-sn-glycerol 1-phosphate + 8 oxidized 2[4Fe-4S]-[ferredoxin] = 2,3-bis-O-(geranylgeranyl)-sn-glycerol 1-phosphate + 8 reduced 2[4Fe-4S]-[ferredoxin] + 16 H(+). The enzyme catalyses a 2,3-bis-O-phytanyl-sn-glycerol 1-phospholipid + 8 A = a 2,3-bis-O-(geranylgeranyl)-sn-glycerol 1-phospholipid + 8 AH2. The catalysed reaction is CDP-2,3-bis-O-(geranylgeranyl)-sn-glycerol + 8 AH2 = CDP-2,3-bis-O-(phytanyl)-sn-glycerol + 8 A. It carries out the reaction archaetidylserine + 8 AH2 = 2,3-bis-O-phytanyl-sn-glycero-3-phospho-L-serine + 8 A. It participates in membrane lipid metabolism; glycerophospholipid metabolism. Functionally, is involved in the reduction of 2,3-digeranylgeranylglycerophospholipids (unsaturated archaeols) into 2,3-diphytanylglycerophospholipids (saturated archaeols) in the biosynthesis of archaeal membrane lipids. Catalyzes the formation of archaetidic acid (2,3-di-O-phytanyl-sn-glyceryl phosphate) from 2,3-di-O-geranylgeranylglyceryl phosphate (DGGGP) via the hydrogenation of each double bond of the isoprenoid chains. Is also probably able to reduce double bonds of geranyl groups in CDP-2,3-bis-O-(geranylgeranyl)-sn-glycerol and archaetidylserine, thus acting at various stages in the biosynthesis of archaeal membrane lipids. The chain is Digeranylgeranylglycerophospholipid reductase 2 from Methanococcoides burtonii (strain DSM 6242 / NBRC 107633 / OCM 468 / ACE-M).